The following is a 95-amino-acid chain: Ribonuclease kappa (95 aa).

The next 2 membrane-spanning stretches (helical) occupy residues 12 to 32 (GLII…FFYI) and 68 to 88 (CWIA…QFYM).

It belongs to the RNase K family.

The protein localises to the membrane. Functionally, endoribonuclease. In terms of biological role, (Microbial infection) Required for the initial stages of clathrin-mediated endocytic uptake of a diverse set of flaviviruses, including dengue and West Nile. Not required for clathrin-mediated endocytosis and macropinocytosis. This chain is Ribonuclease kappa, found in Drosophila melanogaster (Fruit fly).